The sequence spans 155 residues: Ribosomal RNA large subunit methyltransferase H (155 aa).

S-adenosyl-L-methionine contacts are provided by residues leucine 72, glycine 103, and 122 to 127 (LSDLTL).

Belongs to the RNA methyltransferase RlmH family. In terms of assembly, homodimer.

Its subcellular location is the cytoplasm. The catalysed reaction is pseudouridine(1915) in 23S rRNA + S-adenosyl-L-methionine = N(3)-methylpseudouridine(1915) in 23S rRNA + S-adenosyl-L-homocysteine + H(+). Its function is as follows. Specifically methylates the pseudouridine at position 1915 (m3Psi1915) in 23S rRNA. In Variovorax paradoxus (strain S110), this protein is Ribosomal RNA large subunit methyltransferase H.